The primary structure comprises 156 residues: Small ribosomal subunit protein uS7 (156 aa).

Belongs to the universal ribosomal protein uS7 family. As to quaternary structure, part of the 30S ribosomal subunit. Contacts proteins S9 and S11.

In terms of biological role, one of the primary rRNA binding proteins, it binds directly to 16S rRNA where it nucleates assembly of the head domain of the 30S subunit. Is located at the subunit interface close to the decoding center, probably blocks exit of the E-site tRNA. The polypeptide is Small ribosomal subunit protein uS7 (Shewanella denitrificans (strain OS217 / ATCC BAA-1090 / DSM 15013)).